The sequence spans 118 residues: Co-chaperonin GroES (118 aa).

This sequence belongs to the GroES chaperonin family. In terms of assembly, heptamer of 7 subunits arranged in a ring. Interacts with the chaperonin GroEL.

The protein localises to the cytoplasm. In terms of biological role, together with the chaperonin GroEL, plays an essential role in assisting protein folding. The GroEL-GroES system forms a nano-cage that allows encapsulation of the non-native substrate proteins and provides a physical environment optimized to promote and accelerate protein folding. GroES binds to the apical surface of the GroEL ring, thereby capping the opening of the GroEL channel. The protein is Co-chaperonin GroES of Helicobacter pylori (strain HPAG1).